A 383-amino-acid polypeptide reads, in one-letter code: Glucose-1-phosphate adenylyltransferase (383 aa).

Alpha-D-glucose 1-phosphate-binding positions include tyrosine 99, glycine 164, 179–180 (EK), and serine 190.

It belongs to the bacterial/plant glucose-1-phosphate adenylyltransferase family. In terms of assembly, homotetramer.

The catalysed reaction is alpha-D-glucose 1-phosphate + ATP + H(+) = ADP-alpha-D-glucose + diphosphate. It functions in the pathway glycan biosynthesis; glycogen biosynthesis. Involved in the biosynthesis of ADP-glucose, a building block required for the elongation reactions to produce glycogen. Catalyzes the reaction between ATP and alpha-D-glucose 1-phosphate (G1P) to produce pyrophosphate and ADP-Glc. This Halalkalibacterium halodurans (strain ATCC BAA-125 / DSM 18197 / FERM 7344 / JCM 9153 / C-125) (Bacillus halodurans) protein is Glucose-1-phosphate adenylyltransferase.